A 286-amino-acid polypeptide reads, in one-letter code: Beta-lactamase SHV-1 (286 aa).

A signal peptide spans M1–A21. S66 serves as the catalytic Acyl-ester intermediate. A disulfide bond links C73 and C119. E164 serves as the catalytic Proton acceptor. K230–G232 is a binding site for substrate.

This sequence belongs to the class-A beta-lactamase family.

It catalyses the reaction a beta-lactam + H2O = a substituted beta-amino acid. The sequence is that of Beta-lactamase SHV-1 (bla) from Escherichia coli.